The sequence spans 626 residues: Chaperone protein HtpG (626 aa).

The a; substrate-binding stretch occupies residues 1 to 341 (METKQFKAES…SEDLSLNISR (341 aa)). Positions 342–552 (EILQHDRQLK…EGELSIEMEK (211 aa)) are b. Residues 553–626 (VLNAMPNNQN…FTNNICKIMK (74 aa)) form a c region.

Belongs to the heat shock protein 90 family. As to quaternary structure, homodimer.

It localises to the cytoplasm. Its function is as follows. Molecular chaperone. Has ATPase activity. The protein is Chaperone protein HtpG of Clostridium botulinum (strain 657 / Type Ba4).